The chain runs to 584 residues: Delta 8-(E)-sphingolipid desaturase (584 aa).

The Cytochrome b5 heme-binding domain occupies 7–82 (KKIFTRSQII…FTRFKIGEIE (76 aa)). Residues His-42 and His-65 each contribute to the heme site. The disordered stretch occupies residues 109–134 (NKNTSNKKTLDSKLDNDSSNSTSDLE). Residues 261–281 (LFLYSLSFLKINQLFLSAVFM) form a helical membrane-spanning segment. The short motif at 293–297 (HDAGH) is the Histidine box-1 element. A helical membrane pass occupies residues 306–326 (IDNIFGMLIADWFGGLSLGWW). The Histidine box-2 motif lies at 330–334 (HNVHH). Transmembrane regions (helical) follow at residues 386–403 (YLYY…YRLS), 423–443 (YFEF…LVFK), and 455–475 (VMVS…SHFA). A Histidine box-3 motif is present at residues 514-518 (QAIHH).

It belongs to the fatty acid desaturase type 1 family.

Its subcellular location is the membrane. The catalysed reaction is an N-acylsphing-4-enine + 2 Fe(II)-[cytochrome b5] + O2 + 2 H(+) = a (4E,8E)-4-sphinga-4,8-dienine ceramide + 2 Fe(III)-[cytochrome b5] + 2 H2O. Its pathway is lipid metabolism; sphingolipid metabolism. Delta(8)-fatty-acid desaturase which introduces a double bond at the 8-position in the long-chain base (LCB) of ceramides. Required for the formation of the di-unsaturated sphingoid base (E,E)-sphinga-4,8-dienine during glucosylceramide (GluCer) biosynthesis. This chain is Delta 8-(E)-sphingolipid desaturase, found in Candida albicans (strain SC5314 / ATCC MYA-2876) (Yeast).